The primary structure comprises 49 residues: Feruloyl esterase A (49 aa).

Belongs to the AB hydrolase superfamily. FaeA family.

Its subcellular location is the secreted. It catalyses the reaction feruloyl-polysaccharide + H2O = ferulate + polysaccharide.. Its function is as follows. Involved in degradation of plant cell walls. Hydrolyzes the feruloyl-arabinose ester bond in arabinoxylans as well as the feruloyl-galactose and feruloyl-arabinose ester bonds in pectin. Active against methyl esters of sinapate (MSA), but not caffeate (MCA). The sequence is that of Feruloyl esterase A from Talaromyces stipitatus (strain ATCC 10500 / CBS 375.48 / QM 6759 / NRRL 1006) (Penicillium stipitatum).